Consider the following 396-residue polypeptide: Apurinic-apyrimidinic endonuclease (396 aa).

A compositionally biased stretch (basic residues) spans 31-41; sequence KGRGKIQKHIQ. The tract at residues 31 to 100 is disordered; sequence KGRGKIQKHI…TSGETIAQKK (70 aa). Residues 55–70 are compositionally biased toward polar residues; the sequence is NQSPGTTVEETLTEEN. Residues 72–85 show a composition bias toward basic and acidic residues; that stretch reads STDKEETSKLENKP. Residues His185, His225, Glu261, Asp295, His298, His332, Asp345, His347, and Glu377 each coordinate Zn(2+).

This sequence belongs to the AP endonuclease 2 family. It depends on Zn(2+) as a cofactor.

Its subcellular location is the nucleus. The sequence is that of Apurinic-apyrimidinic endonuclease (apn-1) from Caenorhabditis elegans.